The sequence spans 256 residues: Imidazole glycerol phosphate synthase subunit HisF (256 aa).

Catalysis depends on residues Asp-11 and Asp-130.

Belongs to the HisA/HisF family. In terms of assembly, heterodimer of HisH and HisF.

The protein localises to the cytoplasm. It catalyses the reaction 5-[(5-phospho-1-deoxy-D-ribulos-1-ylimino)methylamino]-1-(5-phospho-beta-D-ribosyl)imidazole-4-carboxamide + L-glutamine = D-erythro-1-(imidazol-4-yl)glycerol 3-phosphate + 5-amino-1-(5-phospho-beta-D-ribosyl)imidazole-4-carboxamide + L-glutamate + H(+). Its pathway is amino-acid biosynthesis; L-histidine biosynthesis; L-histidine from 5-phospho-alpha-D-ribose 1-diphosphate: step 5/9. Functionally, IGPS catalyzes the conversion of PRFAR and glutamine to IGP, AICAR and glutamate. The HisF subunit catalyzes the cyclization activity that produces IGP and AICAR from PRFAR using the ammonia provided by the HisH subunit. In Psychrobacter sp. (strain PRwf-1), this protein is Imidazole glycerol phosphate synthase subunit HisF.